Here is a 103-residue protein sequence, read N- to C-terminus: Co-chaperonin GroES (103 aa).

This sequence belongs to the GroES chaperonin family. Heptamer of 7 subunits arranged in a ring. Interacts with the chaperonin GroEL.

The protein resides in the cytoplasm. In terms of biological role, together with the chaperonin GroEL, plays an essential role in assisting protein folding. The GroEL-GroES system forms a nano-cage that allows encapsulation of the non-native substrate proteins and provides a physical environment optimized to promote and accelerate protein folding. GroES binds to the apical surface of the GroEL ring, thereby capping the opening of the GroEL channel. In Synechococcus sp. (strain JA-2-3B'a(2-13)) (Cyanobacteria bacterium Yellowstone B-Prime), this protein is Co-chaperonin GroES.